A 236-amino-acid chain; its full sequence is Adenylate dimethylallyltransferase (236 aa).

It belongs to the isopentenyl transferase family.

The catalysed reaction is dimethylallyl diphosphate + AMP = N(6)-(dimethylallyl)adenosine 5'-phosphate + diphosphate. Functionally, transfers dimethylallyl groups to AMP as part of the biosynthesis of cytokinin phytohormones. This is Adenylate dimethylallyltransferase (ipt) from Pantoea agglomerans pv. gypsophilae (Erwinia herbicola).